A 1258-amino-acid chain; its full sequence is Trafficking protein particle complex subunit 10 (1258 aa).

Phosphoserine is present on Ser-707. Disordered regions lie at residues 888-913 and 1201-1222; these read PASG…QRAG and SSLR…GLPM. Residues 901–911 are compositionally biased toward basic and acidic residues; it reads ELHRKQKDSQR. Residues 1201 to 1214 are compositionally biased toward low complexity; sequence SSLRSRGSTHSTSS.

The protein belongs to the TRAPPC10 family. As to quaternary structure, specific component of the multisubunit TRAPP II complex, which includes at least TRAPPC1, TRAPPC2, TRAPPC3, TRAPPC4, TRAPPC5, TRAPPC6A/B, TRAPPC9, TRAPPC10 and TRAPPC14. TRAPPC9, TRAPPC10 and TRAPPC14 are specific subunits of the TRAPP II complex. Interacts with TRAPPC14.

The protein localises to the golgi apparatus. It localises to the cis-Golgi network. Functionally, specific subunit of the TRAPP (transport protein particle) II complex, a highly conserved vesicle tethering complex that functions in late Golgi trafficking as a membrane tether. The chain is Trafficking protein particle complex subunit 10 (Trappc10) from Mus musculus (Mouse).